A 259-amino-acid polypeptide reads, in one-letter code: Glutamate racemase (259 aa).

Substrate contacts are provided by residues 12–13 and 44–45; these read DS and YG. Residue Cys75 is the Proton donor/acceptor of the active site. Residue 76 to 77 coordinates substrate; sequence NT. Cys186 serves as the catalytic Proton donor/acceptor. 187 to 188 serves as a coordination point for substrate; it reads TH.

It belongs to the aspartate/glutamate racemases family.

The catalysed reaction is L-glutamate = D-glutamate. It functions in the pathway cell wall biogenesis; peptidoglycan biosynthesis. Functionally, provides the (R)-glutamate required for cell wall biosynthesis. In Clostridium novyi (strain NT), this protein is Glutamate racemase.